A 273-amino-acid polypeptide reads, in one-letter code: Polyamine aminopropyltransferase (273 aa).

Positions 5–238 (ENWFSERYSD…GFWSFTIASE (234 aa)) constitute a PABS domain. Residue Gln-34 participates in S-methyl-5'-thioadenosine binding. 2 residues coordinate spermidine: His-65 and Asp-90. S-methyl-5'-thioadenosine-binding positions include Glu-109 and 140-141 (DG). The active-site Proton acceptor is Asp-158. Residue 158-161 (DSTD) participates in spermidine binding. Residue Pro-165 participates in S-methyl-5'-thioadenosine binding.

Belongs to the spermidine/spermine synthase family. As to quaternary structure, homodimer or homotetramer.

The protein resides in the cytoplasm. It carries out the reaction S-adenosyl 3-(methylsulfanyl)propylamine + putrescine = S-methyl-5'-thioadenosine + spermidine + H(+). It participates in amine and polyamine biosynthesis; spermidine biosynthesis; spermidine from putrescine: step 1/1. In terms of biological role, catalyzes the irreversible transfer of a propylamine group from the amino donor S-adenosylmethioninamine (decarboxy-AdoMet) to putrescine (1,4-diaminobutane) to yield spermidine. The sequence is that of Polyamine aminopropyltransferase from Thermoplasma volcanium (strain ATCC 51530 / DSM 4299 / JCM 9571 / NBRC 15438 / GSS1).